The chain runs to 291 residues: Lys-63-specific deubiquitinase BRCC36 (291 aa).

An N-acetylalanine modification is found at alanine 2. An MPN domain is found at 12–179 (VHLESDAFLV…YTCFQSVQAQ (168 aa)). Zn(2+) contacts are provided by histidine 122, histidine 124, and aspartate 135. A JAMM motif motif is present at residues 122–135 (HSHPHITVWPSHVD). Serine 233 carries the post-translational modification Phosphoserine.

The protein belongs to the peptidase M67A family. BRCC36 subfamily. In terms of assembly, component of the ARISC complex, at least composed of UIMC1/RAP80, ABRAXAS1, BRCC3/BRCC36, BABAM2 and BABAM1/NBA1. Component of the BRCA1-A complex, at least composed of BRCA1, BARD1, UIMC1/RAP80, ABRAXAS1, BRCC3/BRCC36, BABAM2 and BABAM1/NBA1. In the BRCA1-A complex, interacts directly with ABRAXAS1 and BABAM2. Component of the BRISC complex, at least composed of ABRAXAS2, BRCC3/BRCC36, BABAM2 and BABAM1/NBA1. Identified in a complex with SHMT2 and the other subunits of the BRISC complex. In the BRISC complex, interacts directly with ABRAXAS2. Identified in a complex with ABRAXAS2 and NUMA1. The BRISC complex interacts with the CSN complex. Component of the BRCA1/BRCA2 containing complex (BRCC), which also contains BRCA1, BRCA2, BARD1, BABAM2 and RAD51. BRCC is a ubiquitin E3 ligase complex that enhances cellular survival following DNA damage. Interacts with BRCA1. Binds polyubiquitin. Interacts with PWWP2B. Interacts with HDAC1; this interaction is enhanced in the presence of PWWP2B. Zn(2+) serves as cofactor.

The protein resides in the nucleus. The protein localises to the cytoplasm. It is found in the cytoskeleton. Its subcellular location is the spindle pole. In terms of biological role, metalloprotease that specifically cleaves 'Lys-63'-linked polyubiquitin chains. Does not have activity toward 'Lys-48'-linked polyubiquitin chains. Component of the BRCA1-A complex, a complex that specifically recognizes 'Lys-63'-linked ubiquitinated histones H2A and H2AX at DNA lesions sites, leading to target the BRCA1-BARD1 heterodimer to sites of DNA damage at double-strand breaks (DSBs). In the BRCA1-A complex, it specifically removes 'Lys-63'-linked ubiquitin on histones H2A and H2AX, antagonizing the RNF8-dependent ubiquitination at double-strand breaks (DSBs). Catalytic subunit of the BRISC complex, a multiprotein complex that specifically cleaves 'Lys-63'-linked ubiquitin in various substrates. Mediates the specific 'Lys-63'-specific deubiquitination associated with the COP9 signalosome complex (CSN), via the interaction of the BRISC complex with the CSN complex. The BRISC complex is required for normal mitotic spindle assembly and microtubule attachment to kinetochores via its role in deubiquitinating NUMA1. Plays a role in interferon signaling via its role in the deubiquitination of the interferon receptor IFNAR1; deubiquitination increases IFNAR1 activity by enhancing its stability and cell surface expression. Acts as a regulator of the NLRP3 inflammasome by mediating deubiquitination of NLRP3, leading to NLRP3 inflammasome assembly. Down-regulates the response to bacterial lipopolysaccharide (LPS) via its role in IFNAR1 deubiquitination. Deubiquitinates HDAC1 and PWWP2B leading to their stabilization. This Rattus norvegicus (Rat) protein is Lys-63-specific deubiquitinase BRCC36 (Brcc3).